Here is a 429-residue protein sequence, read N- to C-terminus: Tyrosine--tRNA ligase (429 aa).

Position 36 (Y36) interacts with L-tyrosine. Residues 41–50 (PTAASLHAGH) carry the 'HIGH' region motif. L-tyrosine is bound by residues Y171 and Q175. Residues 231–235 (KFGKS) carry the 'KMSKS' region motif. K234 serves as a coordination point for ATP. The region spanning 360 to 417 (ATIVDLLVATGLAESRGAARRTVNEGGAAVNNQKIADPDWTPADGDYLHGRWLVVRRG) is the S4 RNA-binding domain.

It belongs to the class-I aminoacyl-tRNA synthetase family. TyrS type 1 subfamily. In terms of assembly, homodimer.

It is found in the cytoplasm. It carries out the reaction tRNA(Tyr) + L-tyrosine + ATP = L-tyrosyl-tRNA(Tyr) + AMP + diphosphate + H(+). Its function is as follows. Catalyzes the attachment of tyrosine to tRNA(Tyr) in a two-step reaction: tyrosine is first activated by ATP to form Tyr-AMP and then transferred to the acceptor end of tRNA(Tyr). The chain is Tyrosine--tRNA ligase from Nocardia farcinica (strain IFM 10152).